We begin with the raw amino-acid sequence, 211 residues long: Uracil phosphoribosyltransferase (211 aa).

5-phospho-alpha-D-ribose 1-diphosphate is bound by residues arginine 77, arginine 102, and 129 to 137 (DPMLATGGS). Uracil is bound by residues isoleucine 192 and 197 to 199 (GDA). Aspartate 198 serves as a coordination point for 5-phospho-alpha-D-ribose 1-diphosphate.

This sequence belongs to the UPRTase family. Mg(2+) serves as cofactor.

It catalyses the reaction UMP + diphosphate = 5-phospho-alpha-D-ribose 1-diphosphate + uracil. It participates in pyrimidine metabolism; UMP biosynthesis via salvage pathway; UMP from uracil: step 1/1. Its activity is regulated as follows. Allosterically activated by GTP. Its function is as follows. Catalyzes the conversion of uracil and 5-phospho-alpha-D-ribose 1-diphosphate (PRPP) to UMP and diphosphate. This Corynebacterium efficiens (strain DSM 44549 / YS-314 / AJ 12310 / JCM 11189 / NBRC 100395) protein is Uracil phosphoribosyltransferase.